The following is a 358-amino-acid chain: Chondroadherin (358 aa).

Residues M1–A20 form the signal peptide. An LRRNT domain is found at A21–E50. Residues C22 and C37 are joined by a disulfide bond. LRR repeat units lie at residues T51–T72, N75–G96, Q99–D120, E123–P144, N147–G168, D171–D192, N195–K216, V219–S240, Y244–G265, and T268–D289. An O-linked (GalNAc...) serine glycan is attached at S143. One can recognise an LRRCT domain in the interval N299 to S347. 2 disulfides stabilise this stretch: C303/C345 and C305/C325. Residues P321 to H358 form a disordered region. The segment covering P348–H358 has biased composition (basic residues).

This sequence belongs to the small leucine-rich proteoglycan (SLRP) family. SLRP class IV subfamily. Mostly monomeric. As to expression, present in femoral head and rib cartilage, as well as in tendon. Detected in bone marrow.

The protein resides in the secreted. It localises to the extracellular space. The protein localises to the extracellular matrix. In terms of biological role, promotes attachment of chondrocytes, fibroblasts, and osteoblasts. This binding is mediated (at least for chondrocytes and fibroblasts) by the integrin alpha(2)beta(1). May play an important role in the regulation of chondrocyte growth and proliferation. The chain is Chondroadherin (Chad) from Rattus norvegicus (Rat).